A 109-amino-acid chain; its full sequence is Probable cytochrome b-c1 complex subunit 7 (109 aa).

It belongs to the UQCRB/QCR7 family. Component of the ubiquinol-cytochrome c oxidoreductase (cytochrome b-c1 complex, complex III, CIII), a multisubunit enzyme composed of 3 respiratory subunits cytochrome b, cytochrome c1 and Rieske protein, 2 core protein subunits, and additional low-molecular weight protein subunits. The complex exists as an obligatory dimer and forms supercomplexes (SCs) in the inner mitochondrial membrane with cytochrome c oxidase (complex IV, CIV).

The protein localises to the mitochondrion inner membrane. Component of the ubiquinol-cytochrome c oxidoreductase, a multisubunit transmembrane complex that is part of the mitochondrial electron transport chain which drives oxidative phosphorylation. The respiratory chain contains 3 multisubunit complexes succinate dehydrogenase (complex II, CII), ubiquinol-cytochrome c oxidoreductase (cytochrome b-c1 complex, complex III, CIII) and cytochrome c oxidase (complex IV, CIV), that cooperate to transfer electrons derived from NADH and succinate to molecular oxygen, creating an electrochemical gradient over the inner membrane that drives transmembrane transport and the ATP synthase. The cytochrome b-c1 complex catalyzes electron transfer from ubiquinol to cytochrome c, linking this redox reaction to translocation of protons across the mitochondrial inner membrane, with protons being carried across the membrane as hydrogens on the quinol. In the process called Q cycle, 2 protons are consumed from the matrix, 4 protons are released into the intermembrane space and 2 electrons are passed to cytochrome c. The polypeptide is Probable cytochrome b-c1 complex subunit 7 (Dictyostelium discoideum (Social amoeba)).